Reading from the N-terminus, the 483-residue chain is Chromatin structure-remodeling complex protein RSC6 (483 aa).

Disordered stretches follow at residues 142-183 (KRKR…EAES) and 273-309 (AQDG…DKPE). The segment covering 148 to 158 (SLSLPLNLQQP) has biased composition (low complexity). Positions 171-180 (DNGEDEDSAE) are enriched in acidic residues.

This sequence to yeast SNF12. Interacts directly with RSC8. Component of the two forms of the RSC complex composed of at least either RSC1 or RSC2, and ARP7, ARP9, LDB7, NPL6, RSC3, RSC30, RSC4, RSC58, RSC6, RSC8, RSC9, SFH1, STH1, HTL1 and probably RTT102. The complexes interact with histone and histone variant components of centromeric chromatin.

The protein localises to the nucleus. Functionally, component of the chromatin structure-remodeling complex (RSC), which is involved in transcription regulation and nucleosome positioning. RSC is responsible for the transfer of a histone octamer from a nucleosome core particle to naked DNA. The reaction requires ATP and involves an activated RSC-nucleosome intermediate. Remodeling reaction also involves DNA translocation, DNA twist and conformational change. As a reconfigurer of centromeric and flanking nucleosomes, RSC complex is required both for proper kinetochore function in chromosome segregation and, via a PKC1-dependent signaling pathway, for organization of the cellular cytoskeleton. This subunit is essential for mitotic growth and suppresses formamide sensitivity of the RSC8 mutants. The polypeptide is Chromatin structure-remodeling complex protein RSC6 (RSC6) (Saccharomyces cerevisiae (strain ATCC 204508 / S288c) (Baker's yeast)).